The following is a 406-amino-acid chain: Succinylornithine transaminase (406 aa).

K252 is subject to N6-(pyridoxal phosphate)lysine.

This sequence belongs to the class-III pyridoxal-phosphate-dependent aminotransferase family. AstC subfamily. Pyridoxal 5'-phosphate serves as cofactor.

It catalyses the reaction N(2)-succinyl-L-ornithine + 2-oxoglutarate = N-succinyl-L-glutamate 5-semialdehyde + L-glutamate. It participates in amino-acid degradation; L-arginine degradation via AST pathway; L-glutamate and succinate from L-arginine: step 3/5. Catalyzes the transamination of N(2)-succinylornithine and alpha-ketoglutarate into N(2)-succinylglutamate semialdehyde and glutamate. Can also act as an acetylornithine aminotransferase. The chain is Succinylornithine transaminase from Citrobacter koseri (strain ATCC BAA-895 / CDC 4225-83 / SGSC4696).